Consider the following 154-residue polypeptide: Prefoldin subunit 2 (154 aa).

A compositionally biased stretch (gly residues) spans 1–18; that stretch reads MAENGGRAGKSSGSGTGK. Disordered stretches follow at residues 1–20 and 124–154; these read MAENGGRAGKSSGSGTGKGA and IRLMGEDEKPAAKENSEGAGAKASSAGVLVS. Positions 124–139 are enriched in basic and acidic residues; it reads IRLMGEDEKPAAKENS. The segment covering 140–154 has biased composition (low complexity); it reads EGAGAKASSAGVLVS.

It belongs to the prefoldin subunit beta family. As to quaternary structure, heterohexamer of two PFD-alpha type and four PFD-beta type subunits. Component of the PAQosome complex which is responsible for the biogenesis of several protein complexes and which consists of R2TP complex members RUVBL1, RUVBL2, RPAP3 and PIH1D1, URI complex members PFDN2, PFDN6, PDRG1, UXT and URI1 as well as ASDURF, POLR2E and DNAAF10/WDR92. Interacts with URI1; the interaction is phosphorylation-dependent and occurs in a growth-dependent manner.

It localises to the nucleus. The protein resides in the cytoplasm. It is found in the mitochondrion. Functionally, binds specifically to cytosolic chaperonin (c-CPN) and transfers target proteins to it. Binds to nascent polypeptide chain and promotes folding in an environment in which there are many competing pathways for nonnative proteins. This is Prefoldin subunit 2 (PFDN2) from Bos taurus (Bovine).